Reading from the N-terminus, the 522-residue chain is Glycogen synthase (522 aa).

The interval 1-29 (MISAVLDTQGDHPQQQAGDRAAPSVPVPG) is disordered. K58 is an ADP-alpha-D-glucose binding site.

Belongs to the glycosyltransferase 1 family. Bacterial/plant glycogen synthase subfamily.

It carries out the reaction [(1-&gt;4)-alpha-D-glucosyl](n) + ADP-alpha-D-glucose = [(1-&gt;4)-alpha-D-glucosyl](n+1) + ADP + H(+). Its pathway is glycan biosynthesis; glycogen biosynthesis. Synthesizes alpha-1,4-glucan chains using ADP-glucose. The protein is Glycogen synthase of Pseudomonas fluorescens (strain ATCC BAA-477 / NRRL B-23932 / Pf-5).